A 167-amino-acid polypeptide reads, in one-letter code: Mitochondrial inner membrane protease subunit 1 (167 aa).

Residues S40 and K83 contribute to the active site.

Belongs to the peptidase S26 family. IMP1 subfamily. Heterodimer of 2 subunits, IMMPL1 and IMMPL2.

It localises to the mitochondrion inner membrane. In terms of biological role, catalyzes the removal of transit peptides required for the targeting of proteins from the mitochondrial matrix, across the inner membrane, into the inter-membrane space. The protein is Mitochondrial inner membrane protease subunit 1 (immp1l) of Xenopus tropicalis (Western clawed frog).